Here is a 203-residue protein sequence, read N- to C-terminus: N-(5'-phosphoribosyl)anthranilate isomerase (203 aa).

Belongs to the TrpF family.

The enzyme catalyses N-(5-phospho-beta-D-ribosyl)anthranilate = 1-(2-carboxyphenylamino)-1-deoxy-D-ribulose 5-phosphate. The protein operates within amino-acid biosynthesis; L-tryptophan biosynthesis; L-tryptophan from chorismate: step 3/5. This Listeria innocua serovar 6a (strain ATCC BAA-680 / CLIP 11262) protein is N-(5'-phosphoribosyl)anthranilate isomerase.